Here is a 445-residue protein sequence, read N- to C-terminus: Exodeoxyribonuclease 7 large subunit (445 aa).

This sequence belongs to the XseA family. In terms of assembly, heterooligomer composed of large and small subunits.

It localises to the cytoplasm. It catalyses the reaction Exonucleolytic cleavage in either 5'- to 3'- or 3'- to 5'-direction to yield nucleoside 5'-phosphates.. Functionally, bidirectionally degrades single-stranded DNA into large acid-insoluble oligonucleotides, which are then degraded further into small acid-soluble oligonucleotides. The sequence is that of Exodeoxyribonuclease 7 large subunit from Pasteurella multocida (strain Pm70).